We begin with the raw amino-acid sequence, 224 residues long: V-type proton ATPase subunit S1-like protein (224 aa).

Residues 147–167 (PAFLIGLAMSLILLLVLAYAL) form a helical membrane-spanning segment.

It belongs to the vacuolar ATPase subunit S1 family.

Its subcellular location is the membrane. This chain is V-type proton ATPase subunit S1-like protein (ATP6AP1L), found in Homo sapiens (Human).